Consider the following 276-residue polypeptide: Elongation factor Ts (276 aa).

The interval 80–83 is involved in Mg(2+) ion dislocation from EF-Tu; that stretch reads TDFV.

Belongs to the EF-Ts family.

It localises to the cytoplasm. Functionally, associates with the EF-Tu.GDP complex and induces the exchange of GDP to GTP. It remains bound to the aminoacyl-tRNA.EF-Tu.GTP complex up to the GTP hydrolysis stage on the ribosome. This is Elongation factor Ts from Acidothermus cellulolyticus (strain ATCC 43068 / DSM 8971 / 11B).